Here is a 690-residue protein sequence, read N- to C-terminus: Putative glycerophosphocholine phosphodiesterase GPCPD1 homolog 1 (690 aa).

One can recognise a CBM20 domain in the interval 1–122 (MDQDYKAHFK…RKNITDQFGS (122 aa)). The GP-PDE domain occupies 344-654 (MLQIGHRGMG…DRIGEDEVLK (311 aa)). Residues 670–690 (ARSQHNSRSPSMSRRCMSTVE) are disordered. Over residues 676 to 690 (SRSPSMSRRCMSTVE) the composition is skewed to low complexity.

Belongs to the glycerophosphoryl diester phosphodiesterase family.

In Caenorhabditis elegans, this protein is Putative glycerophosphocholine phosphodiesterase GPCPD1 homolog 1.